We begin with the raw amino-acid sequence, 277 residues long: MTTRAQAPVGVFDSGLGGLSVLRAIRAELPAESLLYLADSRHAPYGEKPPEFIAGRTLRVCEWLVGQGCKALVIACNTATAQAVHLLREQLAVPVIGVEPGLKPAVATSRSRVVGVLATESTLRSDKFARLLGNVSGDCRVLCQPGYGLVPLIERGDTHSPAVLELLRAYLLPMLEAGADTLVLGCTHYPFLQDAIREIAGDRLTLIDTGHAVARHLGRTLAAAHLQATGAAASPRFLSTADVLPLQAMVAALLGEAPMAQRIDIGDTAVPPLASHQ.

Residues Asp-13–Ser-14 and Tyr-45–Gly-46 contribute to the substrate site. Residue Cys-76 is the Proton donor/acceptor of the active site. Asn-77 to Thr-78 contributes to the substrate binding site. Cys-186 (proton donor/acceptor) is an active-site residue. Thr-187–His-188 provides a ligand contact to substrate.

This sequence belongs to the aspartate/glutamate racemases family.

The catalysed reaction is L-glutamate = D-glutamate. It functions in the pathway cell wall biogenesis; peptidoglycan biosynthesis. Its function is as follows. Provides the (R)-glutamate required for cell wall biosynthesis. This Ralstonia nicotianae (strain ATCC BAA-1114 / GMI1000) (Ralstonia solanacearum) protein is Glutamate racemase.